The sequence spans 213 residues: 3-demethoxyubiquinol 3-hydroxylase (213 aa).

The Fe cation site is built by E62, E92, H95, E144, E176, and H179.

It belongs to the COQ7 family. Fe cation serves as cofactor.

The protein localises to the cell membrane. It catalyses the reaction a 5-methoxy-2-methyl-3-(all-trans-polyprenyl)benzene-1,4-diol + AH2 + O2 = a 3-demethylubiquinol + A + H2O. The protein operates within cofactor biosynthesis; ubiquinone biosynthesis. In terms of biological role, catalyzes the hydroxylation of 2-nonaprenyl-3-methyl-6-methoxy-1,4-benzoquinol during ubiquinone biosynthesis. This is 3-demethoxyubiquinol 3-hydroxylase from Legionella pneumophila (strain Paris).